The primary structure comprises 811 residues: Abnormal pharyngeal pumping eat-20 (811 aa).

The N-terminal stretch at 1–20 is a signal peptide; sequence MTTFCRVLLIFGIYVAVSCA. The Extracellular portion of the chain corresponds to 21-749; that stretch reads QSVEDDVFHF…GKQSSAVASW (729 aa). 3 N-linked (GlcNAc...) asparagine glycosylation sites follow: N90, N171, and N232. 3 consecutive EGF-like domains span residues 220-257, 258-293, and 301-335; these read PPSP…DRCE, LDVC…LLCE, and AAPI…ANCN. Intrachain disulfides connect C224/C235, C229/C245, C247/C256, C261/C272, C266/C281, C283/C292, C305/C314, C309/C323, and C325/C334. An N-linked (GlcNAc...) asparagine glycan is attached at N371. Disordered regions lie at residues 544–579, 592–659, and 690–739; these read FVSP…QVAT, FPTT…AIST, and PHPQ…HTSS. Acidic residues predominate over residues 551 to 567; that stretch reads DENEEEEEDETTDETEE. The span at 570–579 shows a compositional bias: polar residues; the sequence is PTPSTMQVAT. Over residues 597–612 the composition is skewed to acidic residues; the sequence is DMEETDEEEDMTEEVT. The span at 626–639 shows a compositional bias: low complexity; that stretch reads PSSTTFTTEAPTTT. 2 stretches are compositionally biased toward acidic residues: residues 640–655 and 705–717; these read MEEE…ESEE and IESE…ESNE. Residues 750 to 770 traverse the membrane as a helical segment; it reads IIATIALIVLGSLLLATSLFV. At 771 to 811 the chain is on the cytoplasmic side; the sequence is LRYIRQSRKLHGKYNPAREEHNLSAAYAMPMSHIAKEERLI.

It localises to the membrane. Functionally, regulates pharyngeal pumping during feeding. The sequence is that of Abnormal pharyngeal pumping eat-20 (eat-20) from Caenorhabditis briggsae.